A 260-amino-acid polypeptide reads, in one-letter code: Ribonuclease PH (260 aa).

Phosphate contacts are provided by residues R88 and 126-128; that span reads GTR.

This sequence belongs to the RNase PH family. As to quaternary structure, homohexameric ring arranged as a trimer of dimers.

It carries out the reaction tRNA(n+1) + phosphate = tRNA(n) + a ribonucleoside 5'-diphosphate. In terms of biological role, phosphorolytic 3'-5' exoribonuclease that plays an important role in tRNA 3'-end maturation. Removes nucleotide residues following the 3'-CCA terminus of tRNAs; can also add nucleotides to the ends of RNA molecules by using nucleoside diphosphates as substrates, but this may not be physiologically important. Probably plays a role in initiation of 16S rRNA degradation (leading to ribosome degradation) during starvation. This Mycobacterium sp. (strain JLS) protein is Ribonuclease PH.